Reading from the N-terminus, the 429-residue chain is Glucose-1-phosphate adenylyltransferase (429 aa).

Alpha-D-glucose 1-phosphate contacts are provided by residues Gly-162, 177-178, and Ser-209; that span reads EK.

It belongs to the bacterial/plant glucose-1-phosphate adenylyltransferase family. In terms of assembly, homotetramer.

The catalysed reaction is alpha-D-glucose 1-phosphate + ATP + H(+) = ADP-alpha-D-glucose + diphosphate. It participates in glycan biosynthesis; glycogen biosynthesis. Functionally, involved in the biosynthesis of ADP-glucose, a building block required for the elongation reactions to produce glycogen. Catalyzes the reaction between ATP and alpha-D-glucose 1-phosphate (G1P) to produce pyrophosphate and ADP-Glc. This Trichormus variabilis (strain ATCC 29413 / PCC 7937) (Anabaena variabilis) protein is Glucose-1-phosphate adenylyltransferase.